The chain runs to 743 residues: NAD(P)H-quinone oxidoreductase subunit 5, chloroplastic (743 aa).

A run of 16 helical transmembrane segments spans residues 9–29 (WIIP…LLLF), 40–60 (WAFQ…NLSI), 89–109 (IDPL…MVLI), 125–145 (FAYM…SNLI), 147–167 (IYIF…FWFT), 185–205 (GDFG…SFEF), 219–239 (NEVN…GAIA), 258–278 (TPIS…FLVA), 284–304 (FIVI…TVFF), 327–347 (LGYM…FHLI), 354–374 (ALLF…VGYC), 396–416 (NSFL…CFWS), 425–445 (WLYS…TAFY), 551–571 (LFPI…GIPF), 607–627 (VFSV…YKPV), and 723–743 (YLFF…FLNL).

This sequence belongs to the complex I subunit 5 family. NDH is composed of at least 16 different subunits, 5 of which are encoded in the nucleus.

Its subcellular location is the plastid. It localises to the chloroplast thylakoid membrane. It carries out the reaction a plastoquinone + NADH + (n+1) H(+)(in) = a plastoquinol + NAD(+) + n H(+)(out). The catalysed reaction is a plastoquinone + NADPH + (n+1) H(+)(in) = a plastoquinol + NADP(+) + n H(+)(out). Its function is as follows. NDH shuttles electrons from NAD(P)H:plastoquinone, via FMN and iron-sulfur (Fe-S) centers, to quinones in the photosynthetic chain and possibly in a chloroplast respiratory chain. The immediate electron acceptor for the enzyme in this species is believed to be plastoquinone. Couples the redox reaction to proton translocation, and thus conserves the redox energy in a proton gradient. The protein is NAD(P)H-quinone oxidoreductase subunit 5, chloroplastic (ndhF) of Ambrosia trifida (Giant ragweed).